The chain runs to 133 residues: Small ribosomal subunit protein eS17 (133 aa).

Belongs to the eukaryotic ribosomal protein eS17 family.

In Spodoptera frugiperda (Fall armyworm), this protein is Small ribosomal subunit protein eS17 (RpS17).